The primary structure comprises 390 residues: ATP-sensitive inward rectifier potassium channel 11 (390 aa).

Residues Met-1–Asp-65 lie on the Cytoplasmic side of the membrane. The ATP site is built by Asn-48 and Arg-50. Residues Leu-66–Leu-92 form a helical membrane-spanning segment. The Extracellular portion of the chain corresponds to Ile-93–Ser-116. Cysteines 110 and 142 form a disulfide. Residues Phe-117–Phe-133 constitute an intramembrane region (discontinuously helical; Pore-forming). K(+) contacts are provided by Thr-130 and Phe-133. The Selectivity filter motif lies at Thr-130–Gly-135. Topologically, residues Gly-134–Cys-142 are extracellular. The chain crosses the membrane as a helical span at residues Pro-143–Thr-171. The Cytoplasmic portion of the chain corresponds to Ala-172 to Ser-390. Residue Arg-176 participates in a 1,2-diacyl-sn-glycero-3-phospho-(1D-myo-inositol-4,5-bisphosphate) binding. Tyr-330 is an ATP binding site. Thr-341 carries the post-translational modification Phosphothreonine; by MAPK1. At Ser-385 the chain carries Phosphoserine; by MAPK1.

The protein belongs to the inward rectifier-type potassium channel (TC 1.A.2.1) family. KCNJ11 subfamily. In terms of assembly, homotetramer; the homotetramer binds four ATP molecules (one ATP per subunit). Forms an heterooctamer with ABCC8/SUR1; one KCNJ11 homotetramer interacts with four ABCC8/SUR1 molecules. Interacts with ABCC9/SUR2. Phosphorylation by MAPK1 results in changes in channel gating that destabilize the closed states and reduce the ATP sensitivity.

Its subcellular location is the membrane. It carries out the reaction K(+)(in) = K(+)(out). KATP channels are regulated by cytoplasmic ATP/ADP ratios; ATP inhibits the channel by closing the pore, while ADP activates the channel. Activated by phosphatidylinositol 4,5-biphosphate (PtdIns(4,5)P2). Functionally, inward rectifier potassium channel that forms the pore of ATP-sensitive potassium channels (KATP), regulating potassium permeability as a function of cytoplasmic ATP and ADP concentrations in many different cells. Inward rectifier potassium channels are characterized by a greater tendency to allow potassium to flow into the cell rather than out of it. Their voltage dependence is regulated by the concentration of extracellular potassium; as external potassium is raised, the voltage range of the channel opening shifts to more positive voltages. The inward rectification is mainly due to the blockage of outward current by internal magnesium. Can be blocked by extracellular barium. In pancreatic cells, it forms KATP channels with ABCC8/SUR1. Can form cardiac and smooth muscle-type KATP channels with ABCC9. In Mus musculus (Mouse), this protein is ATP-sensitive inward rectifier potassium channel 11 (Kcnj11).